The sequence spans 222 residues: UPF0128 protein PYRAB08320 (222 aa).

Belongs to the UPF0128 family.

In Pyrococcus abyssi (strain GE5 / Orsay), this protein is UPF0128 protein PYRAB08320.